A 424-amino-acid polypeptide reads, in one-letter code: CinA-like protein (424 aa).

It belongs to the CinA family.

This Shewanella baltica (strain OS195) protein is CinA-like protein.